The following is a 501-amino-acid chain: Glycerol kinase (501 aa).

Thr17 lines the ADP pocket. ATP contacts are provided by Thr17, Thr18, and Ser19. Thr17 is a binding site for sn-glycerol 3-phosphate. Arg21 provides a ligand contact to ADP. Sn-glycerol 3-phosphate-binding residues include Arg87, Glu88, Tyr139, and Asp243. Positions 87, 88, 139, 243, and 244 each coordinate glycerol. Residues Thr265 and Gly308 each coordinate ADP. Residues Thr265, Gly308, Gln312, and Gly409 each contribute to the ATP site. Gly409 and Asn413 together coordinate ADP.

Belongs to the FGGY kinase family.

The catalysed reaction is glycerol + ATP = sn-glycerol 3-phosphate + ADP + H(+). It participates in polyol metabolism; glycerol degradation via glycerol kinase pathway; sn-glycerol 3-phosphate from glycerol: step 1/1. Its activity is regulated as follows. Inhibited by fructose 1,6-bisphosphate (FBP). Key enzyme in the regulation of glycerol uptake and metabolism. Catalyzes the phosphorylation of glycerol to yield sn-glycerol 3-phosphate. The chain is Glycerol kinase from Pseudomonas fluorescens (strain ATCC BAA-477 / NRRL B-23932 / Pf-5).